The sequence spans 228 residues: Uracil-DNA glycosylase (228 aa).

The Proton acceptor role is filled by aspartate 64.

This sequence belongs to the uracil-DNA glycosylase (UDG) superfamily. UNG family.

It is found in the cytoplasm. The enzyme catalyses Hydrolyzes single-stranded DNA or mismatched double-stranded DNA and polynucleotides, releasing free uracil.. Functionally, excises uracil residues from the DNA which can arise as a result of misincorporation of dUMP residues by DNA polymerase or due to deamination of cytosine. The polypeptide is Uracil-DNA glycosylase (Pectobacterium atrosepticum (strain SCRI 1043 / ATCC BAA-672) (Erwinia carotovora subsp. atroseptica)).